The primary structure comprises 485 residues: Putative aldehyde dehydrogenase AldY (485 aa).

Gly231–Gly236 contributes to the NAD(+) binding site. Catalysis depends on residues Glu253 and Cys287.

This sequence belongs to the aldehyde dehydrogenase family.

It catalyses the reaction an aldehyde + NAD(+) + H2O = a carboxylate + NADH + 2 H(+). May contribute to protect cells against stress due to ethanol and related compounds. The sequence is that of Putative aldehyde dehydrogenase AldY (aldY) from Bacillus subtilis (strain 168).